The chain runs to 339 residues: Transaldolase (339 aa).

Lysine 135 functions as the Schiff-base intermediate with substrate in the catalytic mechanism.

It belongs to the transaldolase family. Type 1 subfamily. In terms of assembly, homodimer.

The protein resides in the cytoplasm. The catalysed reaction is D-sedoheptulose 7-phosphate + D-glyceraldehyde 3-phosphate = D-erythrose 4-phosphate + beta-D-fructose 6-phosphate. It functions in the pathway carbohydrate degradation; pentose phosphate pathway; D-glyceraldehyde 3-phosphate and beta-D-fructose 6-phosphate from D-ribose 5-phosphate and D-xylulose 5-phosphate (non-oxidative stage): step 2/3. In terms of biological role, transaldolase is important for the balance of metabolites in the pentose-phosphate pathway. The chain is Transaldolase from Prochlorococcus marinus (strain MIT 9211).